Reading from the N-terminus, the 184-residue chain is Heme transporter hrg-4 (184 aa).

Residues 19–39 form a helical membrane-spanning segment; sequence IGWTIFGIVFGISAILTYAIK. An N-linked (GlcNAc...) asparagine glycan is attached at N42. The next 3 membrane-spanning stretches (helical) occupy residues 46–66, 87–107, and 124–146; these read TATT…YWAL, VFIG…AGIT, and IYFS…WSLV.

This sequence belongs to the HRG family.

It is found in the cell membrane. Its function is as follows. Heme transporter that mediates heme uptake across the plasma membrane. This chain is Heme transporter hrg-4, found in Caenorhabditis elegans.